We begin with the raw amino-acid sequence, 404 residues long: Multidrug resistance protein MdtH (404 aa).

At 1–12 the chain is on the cytoplasmic side; it reads MSRVSQARNLGK. A helical transmembrane segment spans residues 13 to 33; sequence YFLLIDNMLVVLGFFVVFPLI. Residues 34-98 lie on the Periplasmic side of the membrane; the sequence is SIRFVDQMGW…GFATMGIAHE (65 aa). A helical membrane pass occupies residues 99–116; that stretch reads PWLLWFSCFLSGLGGTLF. Residues 117-138 lie on the Cytoplasmic side of the membrane; the sequence is DPPRSALVVKLIRPEQRGRFFS. Residues 139-159 traverse the membrane as a helical segment; the sequence is LLMMQDSAGAVIGALLGSWLL. Topologically, residues 160-164 are periplasmic; the sequence is QYDFR. Residues 165-185 traverse the membrane as a helical segment; sequence LVCAMGAILFIVCAIFNAWLL. The Cytoplasmic portion of the chain corresponds to 186–213; that stretch reads PAWKLSTVRTPVREGMRRVISDKRFVTY. The chain crosses the membrane as a helical span at residues 214–234; the sequence is VLTLAGYYMLAVQVMLMLPIM. The Periplasmic segment spans residues 235-243; sequence VNDVAGSPA. A helical membrane pass occupies residues 244 to 264; sequence AVKWMYAIEACLSLTLLYPIA. Residues 265–276 are Cytoplasmic-facing; the sequence is RWSEKRFRLEHR. Residues 277 to 297 traverse the membrane as a helical segment; sequence LMAGLLIMSLSMIPIGLAGNL. At 298-299 the chain is on the periplasmic side; that stretch reads QQ. A helical transmembrane segment spans residues 300-320; sequence LFTLICAFYIGSVIAEPARET. Over 321–339 the chain is Cytoplasmic; that stretch reads LSASLTDARARGSYMGFSR. A helical transmembrane segment spans residues 340-360; it reads LGLAIGGAIGYIGGGWLFDMG. Residues 361–367 lie on the Periplasmic side of the membrane; the sequence is KTLAQPE. A helical transmembrane segment spans residues 368 to 388; sequence LPWMMLGIIGFITFLALGWQF. Over 389-404 the chain is Cytoplasmic; sequence SHKRTPRQYTGARRLI.

It belongs to the major facilitator superfamily. DHA1 family. MdtH (TC 2.A.1.2.21) subfamily.

Its subcellular location is the cell inner membrane. The chain is Multidrug resistance protein MdtH from Salmonella arizonae (strain ATCC BAA-731 / CDC346-86 / RSK2980).